The primary structure comprises 188 residues: Putative CC-type chemokine FPV060 (188 aa).

It belongs to the intercrine beta (chemokine CC) family. Highly divergent.

This is Putative CC-type chemokine FPV060 from Fowlpox virus (strain NVSL) (FPV).